Consider the following 225-residue polypeptide: Ribosome maturation factor RimM (225 aa).

The 82-residue stretch at 144-225 (ADEFYWVDLI…RIVVDWEADY (82 aa)) folds into the PRC barrel domain.

The protein belongs to the RimM family. As to quaternary structure, binds ribosomal protein uS19.

It localises to the cytoplasm. Its function is as follows. An accessory protein needed during the final step in the assembly of 30S ribosomal subunit, possibly for assembly of the head region. Essential for efficient processing of 16S rRNA. May be needed both before and after RbfA during the maturation of 16S rRNA. It has affinity for free ribosomal 30S subunits but not for 70S ribosomes. This Burkholderia orbicola (strain MC0-3) protein is Ribosome maturation factor RimM.